Reading from the N-terminus, the 699-residue chain is Elongation factor G (699 aa).

In terms of domain architecture, tr-type G spans N8–D290. Residues A17 to T24, D88 to H92, and N142 to D145 contribute to the GTP site.

Belongs to the TRAFAC class translation factor GTPase superfamily. Classic translation factor GTPase family. EF-G/EF-2 subfamily.

The protein resides in the cytoplasm. Its function is as follows. Catalyzes the GTP-dependent ribosomal translocation step during translation elongation. During this step, the ribosome changes from the pre-translocational (PRE) to the post-translocational (POST) state as the newly formed A-site-bound peptidyl-tRNA and P-site-bound deacylated tRNA move to the P and E sites, respectively. Catalyzes the coordinated movement of the two tRNA molecules, the mRNA and conformational changes in the ribosome. This chain is Elongation factor G, found in Alcanivorax borkumensis (strain ATCC 700651 / DSM 11573 / NCIMB 13689 / SK2).